We begin with the raw amino-acid sequence, 423 residues long: F-box/LRR-repeat protein 2 (423 aa).

The F-box domain maps to 9 to 55; it reads GLINKKLPKELLLRIFSFLDIVTLCRCAQISKAWNILALDGSNWQRV. LRR repeat units follow at residues 61-87, 88-113, 114-139, 140-165, 166-191, 192-217, 218-243, 244-269, 270-295, 296-321, 322-350, 351-375, and 376-401; these read QTDV…SLRG, CIGV…NLNG, CTKI…DLTS, CVSV…NLSW, CDQI…LLRG, CTQL…NLQS, CSRI…CLSG, CSNL…EAAR, CSHL…DLEE, CVLI…SLSH, CELI…ELDN, CLLV…ELYD, and CQQV…AYFA. An interaction with Calmodulin region spans residues 80-90; the sequence is LRKLSLRGCIG. K201 is covalently cross-linked (Glycyl lysine isopeptide (Lys-Gly) (interchain with G-Cter in ubiquitin)). At T404 the chain carries Phosphothreonine; by GSK3-beta. The S-geranylgeranyl cysteine moiety is linked to residue C420. Positions 420 to 423 match the CAAX motif motif; it reads CVIL.

Part of the SCF (SKP1-CUL1-F-box) E3 ubiquitin-protein ligase complex SCF(FBXL2) composed of CUL1, SKP1, RBX1 and FBXL2. Interacts with calmodulin; may antagonize substrate ubiquitination by SCF(FBXL2). May interact with PIK3R1. Interacts with PTPN13. Post-translationally, phosphorylated by GSK-beta (GSK3B), promoting recognition by FBXO3, leading to its ubiquitination by the SCF(FBXO3) complex. Ubiquitinated at Lys-201 by the SCF(FBXO3) complex in response to lipopolysaccharide (LPS), leading to its degradation by the proteasome.

It is found in the membrane. It functions in the pathway protein modification; protein ubiquitination. Functionally, calcium-activated substrate recognition component of the SCF (SKP1-cullin-F-box protein) E3 ubiquitin-protein ligase complex, SCF(FBXL2), which mediates the ubiquitination and subsequent proteasomal degradation of target proteins. Unlike many F-box proteins, FBXL2 does not seem to target phosphodegron within its substrates but rather calmodulin-binding motifs and is thereby antagonized by calmodulin. This is the case for the cyclins CCND2 and CCND3 which polyubiquitination and subsequent degradation are inhibited by calmodulin. Through CCND2 and CCND3 degradation induces cell-cycle arrest in G(0). SCF(FBXL2) also mediates PIK3R2 ubiquitination and proteasomal degradation thereby regulating phosphatidylinositol 3-kinase signaling and autophagy. PCYT1A monoubiquitination by SCF(FBXL2) and subsequent degradation regulates synthesis of phosphatidylcholine, which is utilized for formation of membranes and of pulmonary surfactant. The SCF(FBXL2) complex acts as a regulator of inflammation by mediating ubiquitination and degradation of TRAF proteins (TRAF1, TRAF2, TRAF3, TRAF4, TRAF5 and TRAF6). The SCF(FBXL2) complex acts as a negative regulator of the NLRP3 inflammasome by mediating ubiquitination and degradation of NLRP3. This Mus musculus (Mouse) protein is F-box/LRR-repeat protein 2.